Reading from the N-terminus, the 650-residue chain is Threonine--tRNA ligase (650 aa).

A TGS domain is found at 3–65; sequence DLVKVTLPDG…ERDARLEIVT (63 aa). The segment at 248–548 is catalytic; it reads DHRRLGPQLG…LVEHYAGAFP (301 aa). Zn(2+) contacts are provided by Cys-349, His-400, and His-525.

The protein belongs to the class-II aminoacyl-tRNA synthetase family. Homodimer. The cofactor is Zn(2+).

Its subcellular location is the cytoplasm. It carries out the reaction tRNA(Thr) + L-threonine + ATP = L-threonyl-tRNA(Thr) + AMP + diphosphate + H(+). Its function is as follows. Catalyzes the attachment of threonine to tRNA(Thr) in a two-step reaction: L-threonine is first activated by ATP to form Thr-AMP and then transferred to the acceptor end of tRNA(Thr). Also edits incorrectly charged L-seryl-tRNA(Thr). This chain is Threonine--tRNA ligase, found in Anaeromyxobacter dehalogenans (strain 2CP-1 / ATCC BAA-258).